A 470-amino-acid polypeptide reads, in one-letter code: Neuraminidase (470 aa).

Residues 1-6 lie on the Intravirion side of the membrane; the sequence is MNPNQK. Residues 7-27 form a helical membrane-spanning segment; that stretch reads IICISATGMTLSVVSLLIGIA. Residues 11–33 are involved in apical transport and lipid raft association; that stretch reads SATGMTLSVVSLLIGIANLGLNI. Residues 28 to 470 are Virion surface-facing; sequence NLGLNIGLHY…HDGAEIIYFK (443 aa). Positions 36–88 are hypervariable stalk region; sequence HYKVGDTPDAPTPNVNGTNSTTTIINNNTQNNFTNITNIVQNKNEERTFLNLT. Residues Asn-51, Asn-54, Asn-62, Asn-67, Asn-70, and Asn-86 are each glycosylated (N-linked (GlcNAc...) asparagine; by host). Residues 91 to 470 form a head of neuraminidase region; the sequence is LCEVNSWHIL…HDGAEIIYFK (380 aa). 8 cysteine pairs are disulfide-bonded: Cys-92–Cys-419, Cys-124–Cys-129, Cys-184–Cys-231, Cys-233–Cys-238, Cys-279–Cys-292, Cys-281–Cys-290, Cys-319–Cys-337, and Cys-423–Cys-449. Substrate is bound at residue Arg-118. Asn-146 is a glycosylation site (N-linked (GlcNAc...) asparagine; by host). The active-site Proton donor/acceptor is the Asp-151. Arg-152 is a binding site for substrate. A glycan (N-linked (GlcNAc...) asparagine; by host) is linked at Asn-201. Residue 277–278 participates in substrate binding; sequence EE. Position 293 (Arg-293) interacts with substrate. Ca(2+) is bound by residues Asp-294, Gly-298, and Asp-325. Arg-372 contributes to the substrate binding site. Asn-402 is a glycosylation site (N-linked (GlcNAc...) asparagine; by host). Tyr-406 (nucleophile) is an active-site residue.

The protein belongs to the glycosyl hydrolase 34 family. Homotetramer. It depends on Ca(2+) as a cofactor. N-glycosylated.

It is found in the virion membrane. The protein resides in the host apical cell membrane. The enzyme catalyses Hydrolysis of alpha-(2-&gt;3)-, alpha-(2-&gt;6)-, alpha-(2-&gt;8)- glycosidic linkages of terminal sialic acid residues in oligosaccharides, glycoproteins, glycolipids, colominic acid and synthetic substrates.. Its activity is regulated as follows. Inhibited by the neuraminidase inhibitors zanamivir (Relenza) and oseltamivir (Tamiflu). These drugs interfere with the release of progeny virus from infected cells and are effective against all influenza strains. Resistance to neuraminidase inhibitors is quite rare. Catalyzes the removal of terminal sialic acid residues from viral and cellular glycoconjugates. Cleaves off the terminal sialic acids on the glycosylated HA during virus budding to facilitate virus release. Additionally helps virus spread through the circulation by further removing sialic acids from the cell surface. These cleavages prevent self-aggregation and ensure the efficient spread of the progeny virus from cell to cell. Otherwise, infection would be limited to one round of replication. Described as a receptor-destroying enzyme because it cleaves a terminal sialic acid from the cellular receptors. May facilitate viral invasion of the upper airways by cleaving the sialic acid moieties on the mucin of the airway epithelial cells. Likely to plays a role in the budding process through its association with lipid rafts during intracellular transport. May additionally display a raft-association independent effect on budding. Plays a role in the determination of host range restriction on replication and virulence. Sialidase activity in late endosome/lysosome traffic seems to enhance virus replication. This chain is Neuraminidase, found in Influenza A virus (strain A/Gull/Astrakhan/227/1984 H13N6).